A 1399-amino-acid chain; its full sequence is Dicer-like protein 2 (1399 aa).

The 177-residue stretch at 18-194 (MVEESMQSNI…EDLQQIERNL (177 aa)) folds into the Helicase ATP-binding domain. Residue 31–38 (MDTGSGKT) coordinates ATP. The DEAH box motif lies at 139-142 (DEAH). Positions 364–549 (KLQLLIKFLV…QSETGHRNFE (186 aa)) constitute a Helicase C-terminal domain. The 95-residue stretch at 562 to 656 (ASQHLHHFCS…LPARQEADDE (95 aa)) folds into the Dicer dsRNA-binding fold domain. 2 RNase III domains span residues 897-1054 (LPSI…TVGG) and 1094-1270 (LDVL…IDSL). The Mg(2+) site is built by glutamate 1133, aspartate 1256, and glutamate 1259. Residues 1301–1370 (HPKERLGHLA…AWKAVGVLES (70 aa)) enclose the DRBM domain.

Belongs to the helicase family. Dicer subfamily. Requires Mg(2+) as cofactor. The cofactor is Mn(2+).

Functionally, dicer-like endonuclease involved in cleaving double-stranded RNA in the RNA interference (RNAi) pathway. Produces 21 to 25 bp dsRNAs (siRNAs) which target the selective destruction of homologous RNAs leading to sequence-specific suppression of gene expression, called post-transcriptional gene silencing (PTGS). Part of a broad host defense response against viral infection and transposons. The chain is Dicer-like protein 2 (DCL2) from Phaeosphaeria nodorum (strain SN15 / ATCC MYA-4574 / FGSC 10173) (Glume blotch fungus).